A 74-amino-acid polypeptide reads, in one-letter code: ATP synthase F(1) complex subunit epsilon, mitochondrial (74 aa).

It belongs to the eukaryotic ATPase epsilon family. As to quaternary structure, component of the ATP synthase complex composed at least of ATP5F1A/subunit alpha, ATP5F1B/subunit beta, ATP5MC1/subunit c (homooctomer), MT-ATP6/subunit a, MT-ATP8/subunit 8, ATP5ME/subunit e, ATP5MF/subunit f, ATP5MG/subunit g, ATP5MK/subunit k, ATP5MJ/subunit j, ATP5F1C/subunit gamma, ATP5F1D/subunit delta, ATP5F1E/subunit epsilon, ATP5PF/subunit F6, ATP5PB/subunit b, ATP5PD/subunit d, ATP5PO/subunit OSCP. ATP synthase complex consists of a soluble F(1) head domain (subunits alpha(3) and beta(3)) - the catalytic core - and a membrane F(0) domain - the membrane proton channel (subunits c, a, 8, e, f, g, k and j). These two domains are linked by a central stalk (subunits gamma, delta, and epsilon) rotating inside the F1 region and a stationary peripheral stalk (subunits F6, b, d, and OSCP).

Its subcellular location is the mitochondrion. The protein resides in the mitochondrion inner membrane. Subunit epsilon, of the mitochondrial membrane ATP synthase complex (F(1)F(0) ATP synthase or Complex V) that produces ATP from ADP in the presence of a proton gradient across the membrane which is generated by electron transport complexes of the respiratory chain. ATP synthase complex consist of a soluble F(1) head domain - the catalytic core - and a membrane F(1) domain - the membrane proton channel. These two domains are linked by a central stalk rotating inside the F(1) region and a stationary peripheral stalk. During catalysis, ATP synthesis in the catalytic domain of F(1) is coupled via a rotary mechanism of the central stalk subunits to proton translocation. In vivo, can only synthesize ATP although its ATP hydrolase activity can be activated artificially in vitro. May be essential for the assembly of F(1) and may play an important role in the incorporation of the hydrophobic subunit c into the F(1)-c oligomer rotor of the mitochondrial ATP synthase complex. The polypeptide is ATP synthase F(1) complex subunit epsilon, mitochondrial (Dictyostelium discoideum (Social amoeba)).